The chain runs to 371 residues: tRNA-specific 2-thiouridylase MnmA (371 aa).

ATP is bound by residues 13-20 (GMSGGVDS) and Met39. Positions 99–101 (NPD) are interaction with target base in tRNA. Cys104 acts as the Nucleophile in catalysis. Cysteines 104 and 200 form a disulfide. Gly128 provides a ligand contact to ATP. Positions 150 to 152 (KDQ) are interaction with tRNA. Residue Cys200 is the Cysteine persulfide intermediate of the active site. The interaction with tRNA stretch occupies residues 308–309 (RY).

It belongs to the MnmA/TRMU family.

It localises to the cytoplasm. It catalyses the reaction S-sulfanyl-L-cysteinyl-[protein] + uridine(34) in tRNA + AH2 + ATP = 2-thiouridine(34) in tRNA + L-cysteinyl-[protein] + A + AMP + diphosphate + H(+). Its function is as follows. Catalyzes the 2-thiolation of uridine at the wobble position (U34) of tRNA, leading to the formation of s(2)U34. The polypeptide is tRNA-specific 2-thiouridylase MnmA (Bacillus cereus (strain ATCC 10987 / NRS 248)).